The chain runs to 156 residues: Type IV major fimbrial protein FimA (156 aa).

Residues 1–7 (MKSLQKG) constitute a propeptide, leader sequence. Residue Phe8 is modified to N-methylphenylalanine. The helical transmembrane segment at 8–28 (FTLIELMIVVAIIGILAAIAI) threads the bilayer. 2 cysteine pairs are disulfide-bonded: Cys57/Cys67 and Cys140/Cys153.

Belongs to the N-Me-Phe pilin family. As to quaternary structure, the pili are polar flexible filaments of about 5.4 nanometers diameter and 2.5 micrometers average length; they consist of only a single polypeptide chain arranged in a helical configuration of five subunits per turn in the assembled pilus.

It localises to the fimbrium. It is found in the membrane. Its function is as follows. Major component of the type IV fimbriae that plays an essential role in twitching motility, natural transformation, and protease secretion. This Dichelobacter nodosus (Bacteroides nodosus) protein is Type IV major fimbrial protein FimA (fimA).